Here is a 1368-residue protein sequence, read N- to C-terminus: DNA-directed RNA polymerase subunit beta (1368 aa).

This sequence belongs to the RNA polymerase beta chain family. As to quaternary structure, the RNAP catalytic core consists of 2 alpha, 1 beta, 1 beta' and 1 omega subunit. When a sigma factor is associated with the core the holoenzyme is formed, which can initiate transcription.

It catalyses the reaction RNA(n) + a ribonucleoside 5'-triphosphate = RNA(n+1) + diphosphate. Its function is as follows. DNA-dependent RNA polymerase catalyzes the transcription of DNA into RNA using the four ribonucleoside triphosphates as substrates. The sequence is that of DNA-directed RNA polymerase subunit beta from Burkholderia cenocepacia (strain HI2424).